The sequence spans 416 residues: Gamma-glutamyl phosphate reductase (416 aa).

It belongs to the gamma-glutamyl phosphate reductase family.

It localises to the cytoplasm. It catalyses the reaction L-glutamate 5-semialdehyde + phosphate + NADP(+) = L-glutamyl 5-phosphate + NADPH + H(+). Its pathway is amino-acid biosynthesis; L-proline biosynthesis; L-glutamate 5-semialdehyde from L-glutamate: step 2/2. In terms of biological role, catalyzes the NADPH-dependent reduction of L-glutamate 5-phosphate into L-glutamate 5-semialdehyde and phosphate. The product spontaneously undergoes cyclization to form 1-pyrroline-5-carboxylate. This Streptococcus pyogenes serotype M49 (strain NZ131) protein is Gamma-glutamyl phosphate reductase.